A 288-amino-acid chain; its full sequence is Polyamine aminopropyltransferase (288 aa).

The region spanning 9 to 238 (ETLHDQFGQY…GIMTFAWATD (230 aa)) is the PABS domain. S-methyl-5'-thioadenosine is bound at residue Gln33. Positions 64 and 88 each coordinate spermidine. S-methyl-5'-thioadenosine is bound by residues Glu108 and 140-141 (DG). Asp158 functions as the Proton acceptor in the catalytic mechanism. Position 158 to 161 (158 to 161 (DCTD)) interacts with spermidine. Pro165 is a binding site for S-methyl-5'-thioadenosine.

This sequence belongs to the spermidine/spermine synthase family. Homodimer or homotetramer.

The protein resides in the cytoplasm. The catalysed reaction is S-adenosyl 3-(methylsulfanyl)propylamine + putrescine = S-methyl-5'-thioadenosine + spermidine + H(+). The protein operates within amine and polyamine biosynthesis; spermidine biosynthesis; spermidine from putrescine: step 1/1. Its function is as follows. Catalyzes the irreversible transfer of a propylamine group from the amino donor S-adenosylmethioninamine (decarboxy-AdoMet) to putrescine (1,4-diaminobutane) to yield spermidine. The sequence is that of Polyamine aminopropyltransferase from Shigella boydii serotype 4 (strain Sb227).